The sequence spans 400 residues: Multidrug resistance protein 2 (400 aa).

Helical transmembrane passes span 11–31 (IFIILLSNIFVAFLGIGLIIP), 46–66 (TMGYLVAAFAISQLITSPFAG), 78–98 (IILGLLIFSLSELIFGLGTHV), 106–126 (ILGGVSAAFIMPAVTAYVADI), 142–162 (AISTGFIIGPGAGGFIAGFGI), 164–184 (MPFFFASAIALIAAVTSVFIL), 213–233 (IHPVYFIAFIIVFVMAFGLSA), 253–273 (IAAIITISSIVAVVIQVLLFG), 297–317 (FVSTVMSGFLTVLLVTCFIFL), 346–366 (STYTSLGNIFGPALGGILFDL), and 368–388 (IHYPFLFAGFVMIVGLGLTMV).

Belongs to the major facilitator superfamily. TCR/Tet family.

Its subcellular location is the cell membrane. In terms of biological role, energy-dependent efflux pump responsible for decreased drug accumulation in multi-drug-resistant cells. Probably uses a transmembrane proton gradient as the energy source. Causes the efflux of a variety of toxic substances, including such structurally diverse compounds as ethidium bromide, rhodamine and acridine dyes, tetraphenylphosphonium, puromycin, chloramphenicol, doxorubicin, and fluoroquinolone antibiotics. The protein is Multidrug resistance protein 2 (blt) of Bacillus subtilis (strain 168).